Consider the following 624-residue polypeptide: Leucine-rich repeat and IQ domain-containing protein 3 (624 aa).

3 LRR repeats span residues 51–72 (SLRVCIFSNNFITDIHPLQSCI), 73–94 (KLIKLDLHGNQIKSLPNTKFWN), and 98–119 (NLKLLYLHDNGFAKLKNICVLS). One can recognise an LRRCT domain in the interval 132–179 (CPVSLKKGYRHVLVNSIWPLKALDHHVISDEEIIQNWHLPERFKACNH). In terms of domain architecture, IQ spans 215 to 244 (HNSPVLIVQRWIRGFLVRKNLSPVFFHKKK). Residues 553 to 614 (KQKLKAEKYR…TKVAIVKTNL (62 aa)) adopt a coiled-coil conformation.

The protein is Leucine-rich repeat and IQ domain-containing protein 3 (LRRIQ3) of Homo sapiens (Human).